The primary structure comprises 482 residues: Nuclear transcription factor Y subunit nfya-1 (482 aa).

The interval 1-160 (MNGASRGDVQ…NGSYIQYNEP (160 aa)) is disordered. Residues 72-93 (SSPNVQTQCHQPPVVRSQTHQA) are compositionally biased toward polar residues. Over residues 94–110 (SVSQTTPTQTTPSQYTP) the composition is skewed to low complexity. Polar residues-rich tracts occupy residues 126 to 135 (HVTPSQQQRI) and 144 to 160 (VSQSQPQNGSYIQYNEP). The Subunit association domain (SAD) signature appears at 306–329 (LVNPKQFNRIMRRREMRQQLEASG). The segment at residues 336-361 (QKYLHESRHLHALKRKRGLDGRFDNT) is a DNA-binding region (NFYA/HAP2-type). A disordered region spans residues 344–414 (HLHALKRKRG…QPKGGIVNSS (71 aa)). Residues 353-362 (GLDGRFDNTK) are compositionally biased toward basic and acidic residues. Residues 363–375 (TAESSSMVSSTTS) show a composition bias toward low complexity.

Belongs to the NFYA/HAP2 subunit family. In terms of assembly, forms a heterotrimeric transcription factor complex (nfya-1-NF-Y complex) composed of nfya-1, nfyb-1 and nfyc-1, which binds to 5'-CCAAT-3' box motif in the promoters of its target genes. Interacts with the nfyb-1 and nfyc-1 dimer; the interaction is required for subsequent binding to the 5'-CCAAT-3' box motif in DNA. Does not interact with either nfyb-1 or nfyc-1 in their monomeric form. Interacts with mes-3. Expressed in certain parts of the gonads with high expression in fertilized oocytes in the uterus and mature oocytes from the distal to the proximal arm of the gonad, but weak expression in the syncytial ovaries and immature oocytes at the beginning of the proximal arm of the gonad. Highly expressed in the head ganglia neurons and the developing hermaphrodite vulva and male tail. Weakly expressed in most somatic cells. Not expressed in the intestine, the hypodermis, body wall muscle surrounding the pseudocoelomic space, secretory cells in the pharyngeal terminal bulb wall, in the small ganglia surrounding the pharynx and in the neurons running anteriorly to the sensory organs in the head.

It localises to the nucleus. Functionally, component of the sequence-specific heterotrimeric transcription factor (nfya-1-NF-Y) which specifically recognizes a 5'-CCAAT-3' box motif found in the promoters of its target genes to regulate their expression and control cellular identity in particular tissue types. In association with the components in the nfya-1-NF-Y complex, represses the expression of the T-box transcription factor tbx-2 throughout larval development, which most likely restricts its expression to certain tissues. May act to repress txb-2 expression in conjunction with tbx-2 itself, which has an autoregulatory role. With the components in this complex, negatively regulates the expression of the homeobox protein egl-5 to spatially restrict its expression in tissues such as the head. May regulate egl-5 expression in association with the mes-2-mes-3-mes-6 complex. This Caenorhabditis elegans protein is Nuclear transcription factor Y subunit nfya-1.